The following is a 307-amino-acid chain: Nicotinamide/nicotinic acid mononucleotide adenylyltransferase 2 (307 aa).

2 residues coordinate NAD(+): S16 and F17. H24 is a binding site for ATP. NAD(+) is bound by residues W92 and T95. 2 S-palmitoyl cysteine lipidation sites follow: C164 and C165. 5 residues coordinate NAD(+): G200, D202, L212, W213, and R232. Residue 271-274 (TKSR) coordinates ATP.

Belongs to the eukaryotic NMN adenylyltransferase family. Monomer. Mg(2+) serves as cofactor. Post-translationally, degraded in response to injured neurite. Degradation is caused by polyubiquitination by MYCBP2 after recognition by FBXO45. Palmitoylated; palmitoylation is required for membrane association.

Its subcellular location is the golgi apparatus membrane. It is found in the cytoplasmic vesicle membrane. The protein resides in the cytoplasm. The protein localises to the cell projection. It localises to the axon. The catalysed reaction is beta-nicotinamide D-ribonucleotide + ATP + H(+) = diphosphate + NAD(+). It catalyses the reaction nicotinate beta-D-ribonucleotide + ATP + H(+) = deamido-NAD(+) + diphosphate. It functions in the pathway cofactor biosynthesis; NAD(+) biosynthesis; NAD(+) from nicotinamide D-ribonucleotide: step 1/1. The protein operates within cofactor biosynthesis; NAD(+) biosynthesis; deamido-NAD(+) from nicotinate D-ribonucleotide: step 1/1. Inhibited by P1-(adenosine-5')-P3-(nicotinamide-riboside-5')-triphosphate (Np3AD) and P1-(adenosine-5')-P4-(nicotinamide-riboside-5')-tetraphosphate (Np4AD). Its function is as follows. Nicotinamide/nicotinate-nucleotide adenylyltransferase that acts as an axon maintenance factor. Axon survival factor required for the maintenance of healthy axons: acts by delaying Wallerian axon degeneration, an evolutionarily conserved process that drives the loss of damaged axons. Catalyzes the formation of NAD(+) from nicotinamide mononucleotide (NMN) and ATP. Can also use the deamidated form; nicotinic acid mononucleotide (NaMN) as substrate but with a lower efficiency. Cannot use triazofurin monophosphate (TrMP) as substrate. Also catalyzes the reverse reaction, i.e. the pyrophosphorolytic cleavage of NAD(+). For the pyrophosphorolytic activity prefers NAD(+), NADH and NaAD as substrates and degrades nicotinic acid adenine dinucleotide phosphate (NHD) less effectively. Fails to cleave phosphorylated dinucleotides NADP(+), NADPH and NaADP(+). Also acts as an activator of ADP-ribosylation by supporting the catalytic activity of PARP16 and promoting mono-ADP-ribosylation of ribosomes by PARP16. May be involved in the maintenance of axonal integrity. The protein is Nicotinamide/nicotinic acid mononucleotide adenylyltransferase 2 (NMNAT2) of Bos taurus (Bovine).